Here is a 535-residue protein sequence, read N- to C-terminus: Protein PyrBI (535 aa).

Positions 1–341 (MENKFMGRSL…MIAGKIGDDY (341 aa)) are aspartate carbamoyltransferase. The segment at 342–370 (KGPEPKSCERVEDEDYIVEVPINNSKESK) is linker. The tract at residues 371 to 535 (VETFSEGVRP…FKEIWGEKKN (165 aa)) is aspartate carbamoyltransferase regulatory region. The Zn(2+) site is built by cysteine 488, cysteine 493, cysteine 517, and cysteine 520.

In the N-terminal section; belongs to the aspartate/ornithine carbamoyltransferase superfamily. ATCase family. It in the C-terminal section; belongs to the PyrI family.

The enzyme catalyses carbamoyl phosphate + L-aspartate = N-carbamoyl-L-aspartate + phosphate + H(+). The protein operates within pyrimidine metabolism; UMP biosynthesis via de novo pathway; (S)-dihydroorotate from bicarbonate: step 2/3. This Treponema denticola (strain ATCC 35405 / DSM 14222 / CIP 103919 / JCM 8153 / KCTC 15104) protein is Protein PyrBI (pyrBI).